Here is a 145-residue protein sequence, read N- to C-terminus: Cuticle protein 65 (145 aa).

Tandem repeats lie at residues 27–30, 33–37, 39–42, 86–89, 92–95, 98–101, and 123–126.

Functionally, component of the cuticle of migratory locust which contains more than 100 different structural proteins. This chain is Cuticle protein 65, found in Locusta migratoria (Migratory locust).